Consider the following 171-residue polypeptide: 3-hydroxydecanoyl-[acyl-carrier-protein] dehydratase (171 aa).

His70 is an active-site residue.

The protein belongs to the thioester dehydratase family. FabA subfamily. Homodimer.

It is found in the cytoplasm. It catalyses the reaction a (3R)-hydroxyacyl-[ACP] = a (2E)-enoyl-[ACP] + H2O. It carries out the reaction (3R)-hydroxydecanoyl-[ACP] = (2E)-decenoyl-[ACP] + H2O. The enzyme catalyses (2E)-decenoyl-[ACP] = (3Z)-decenoyl-[ACP]. It participates in lipid metabolism; fatty acid biosynthesis. Necessary for the introduction of cis unsaturation into fatty acids. Catalyzes the dehydration of (3R)-3-hydroxydecanoyl-ACP to E-(2)-decenoyl-ACP and then its isomerization to Z-(3)-decenoyl-ACP. Can catalyze the dehydratase reaction for beta-hydroxyacyl-ACPs with saturated chain lengths up to 16:0, being most active on intermediate chain length. The protein is 3-hydroxydecanoyl-[acyl-carrier-protein] dehydratase of Pseudomonas fluorescens (strain Pf0-1).